We begin with the raw amino-acid sequence, 236 residues long: MPAYKRVLLKLSGEALMGDDAFGINRATIEGMVNDIAEIVKLGVQVAVVIGGGNIFRGVAGGAAGMDRATADYMGMLATMMNALALQDAMRHANIEGRVQSALRMDQVVEPYIRPRAIRQLEEGKVVIFAAGTGNPFFTTDTAAALRGAEIGAEIVLKATKVDGVYTADPKKDPSATRYTTITFDEAISRNLQVMDATAFALCRDQKLPIKVFSIVKPGALKRVVLGEDEGTLVHV.

Residue 10–13 (KLSG) coordinates ATP. A UMP-binding site is contributed by Gly-52. ATP is bound by residues Gly-53 and Arg-57. UMP contacts are provided by residues Asp-72 and 133-140 (TGNPFFTT). ATP contacts are provided by Thr-160, Tyr-166, and Asp-169.

This sequence belongs to the UMP kinase family. Homohexamer.

It is found in the cytoplasm. The catalysed reaction is UMP + ATP = UDP + ADP. The protein operates within pyrimidine metabolism; CTP biosynthesis via de novo pathway; UDP from UMP (UMPK route): step 1/1. Its activity is regulated as follows. Inhibited by UTP. Functionally, catalyzes the reversible phosphorylation of UMP to UDP. The sequence is that of Uridylate kinase from Cupriavidus pinatubonensis (strain JMP 134 / LMG 1197) (Cupriavidus necator (strain JMP 134)).